Consider the following 154-residue polypeptide: Ribonuclease H (154 aa).

One can recognise an RNase H type-1 domain in the interval 1 to 142; the sequence is MRKQVEIFTD…CDELARAAAG (142 aa). Mg(2+) is bound by residues Asp-10, Glu-48, Asp-70, and Asp-134.

The protein belongs to the RNase H family. In terms of assembly, monomer. Mg(2+) serves as cofactor.

The protein resides in the cytoplasm. The catalysed reaction is Endonucleolytic cleavage to 5'-phosphomonoester.. In terms of biological role, endonuclease that specifically degrades the RNA of RNA-DNA hybrids. The protein is Ribonuclease H of Pectobacterium carotovorum subsp. carotovorum (strain PC1).